We begin with the raw amino-acid sequence, 78 residues long: Large ribosomal subunit protein bL28 (78 aa).

It belongs to the bacterial ribosomal protein bL28 family.

The sequence is that of Large ribosomal subunit protein bL28 from Synechococcus sp. (strain WH7803).